The chain runs to 393 residues: S-adenosylmethionine synthase (393 aa).

E9 lines the Mg(2+) pocket. An ATP-binding site is contributed by H15. Position 43 (E43) interacts with K(+). L-methionine contacts are provided by E56 and Q99. Residues 167–169 (DGK), 235–238 (SGRF), D246, 252–253 (RK), A269, K273, and K277 each bind ATP. D246 contacts L-methionine. K277 contacts L-methionine.

This sequence belongs to the AdoMet synthase family. As to quaternary structure, homotetramer. It depends on Mn(2+) as a cofactor. Mg(2+) serves as cofactor. The cofactor is Co(2+). Requires K(+) as cofactor.

The protein localises to the cytoplasm. It carries out the reaction L-methionine + ATP + H2O = S-adenosyl-L-methionine + phosphate + diphosphate. It participates in amino-acid biosynthesis; S-adenosyl-L-methionine biosynthesis; S-adenosyl-L-methionine from L-methionine: step 1/1. Its function is as follows. Catalyzes the formation of S-adenosylmethionine from methionine and ATP. The reaction comprises two steps that are both catalyzed by the same enzyme: formation of S-adenosylmethionine (AdoMet) and triphosphate, and subsequent hydrolysis of the triphosphate. This is S-adenosylmethionine synthase (SAMS) from Brassica rapa subsp. pekinensis (Chinese cabbage).